We begin with the raw amino-acid sequence, 155 residues long: Large ribosomal subunit protein eL24 (155 aa).

The segment covering 94–129 (RSLKPEVRKAQRDEKKKADKEKKKADKAARKSEKAK) has biased composition (basic and acidic residues). Residues 94-155 (RSLKPEVRKA…AFQKVAATSR (62 aa)) form a disordered region.

The protein belongs to the eukaryotic ribosomal protein eL24 family.

The sequence is that of Large ribosomal subunit protein eL24 (RPL24) from Kluyveromyces lactis (strain ATCC 8585 / CBS 2359 / DSM 70799 / NBRC 1267 / NRRL Y-1140 / WM37) (Yeast).